We begin with the raw amino-acid sequence, 510 residues long: Sulfoquinovosyl transferase SQD2 (510 aa).

The N-terminal 83 residues, 1 to 83 (MTTLSSINLS…SNDMTITQVR (83 aa)), are a transit peptide targeting the chloroplast. Serine 88 is modified (phosphoserine). The chain crosses the membrane as a helical span at residues 198 to 218 (PGVMVFGALAIAKMLSVPIVM).

The protein belongs to the glycosyltransferase group 1 family. Glycosyltransferase 4 subfamily.

Its subcellular location is the plastid. The protein resides in the chloroplast membrane. The enzyme catalyses UDP-alpha-D-6-sulfoquinovose + a 1,2-diacyl-sn-glycerol = a 6-sulfo-alpha-D-quinovosyldiacylglycerol + UDP + H(+). It functions in the pathway glycolipid biosynthesis. Functionally, catalyzes the transfer of the sulfoquinovose moiety from UDP-sulfoquinovose to diacylglycerol during sulfolipid biosynthesis. Sulfolipid contributes to maintaining a negatively charged lipid-water interface, a requirement for proper function of photosynthetic membranes. Sulfolipid may also function as a substitute of anionic phospholipids under phosphate-limited growth conditions. The sequence is that of Sulfoquinovosyl transferase SQD2 from Arabidopsis thaliana (Mouse-ear cress).